Reading from the N-terminus, the 263-residue chain is Endonuclease 8 (263 aa).

The Schiff-base intermediate with DNA role is filled by Pro-2. Glu-3 serves as the catalytic Proton donor. The Proton donor; for beta-elimination activity role is filled by Lys-53. DNA is bound by residues Gln-70, Arg-125, and Asn-169. The segment at Lys-229–His-263 adopts an FPG-type zinc-finger fold. Arg-253 acts as the Proton donor; for delta-elimination activity in catalysis.

Belongs to the FPG family. Requires Zn(2+) as cofactor.

It carries out the reaction 2'-deoxyribonucleotide-(2'-deoxyribose 5'-phosphate)-2'-deoxyribonucleotide-DNA = a 3'-end 2'-deoxyribonucleotide-(2,3-dehydro-2,3-deoxyribose 5'-phosphate)-DNA + a 5'-end 5'-phospho-2'-deoxyribonucleoside-DNA + H(+). Functionally, involved in base excision repair of DNA damaged by oxidation or by mutagenic agents. Acts as a DNA glycosylase that recognizes and removes damaged bases. Has a preference for oxidized pyrimidines, such as thymine glycol, 5,6-dihydrouracil and 5,6-dihydrothymine. Has AP (apurinic/apyrimidinic) lyase activity and introduces nicks in the DNA strand. Cleaves the DNA backbone by beta-delta elimination to generate a single-strand break at the site of the removed base with both 3'- and 5'-phosphates. The polypeptide is Endonuclease 8 (Shigella dysenteriae serotype 1 (strain Sd197)).